Reading from the N-terminus, the 439-residue chain is Microfibrillar-associated protein 1 (439 aa).

Disordered regions lie at residues 1 to 27 and 39 to 200; these read MSVP…NEKG and YVSG…PRLK. N-acetylserine is present on serine 2. Phosphoserine is present on residues serine 52 and serine 53. Residues 61–70 show a composition bias toward basic and acidic residues; that stretch reads QFIKKAKEQE. Lysine 67 is covalently cross-linked (Glycyl lysine isopeptide (Lys-Gly) (interchain with G-Cter in SUMO2)). The segment covering 71 to 81 has biased composition (acidic residues); that stretch reads AEPEEQEEDSS. Serine 94, serine 116, serine 118, serine 132, and serine 133 each carry phosphoserine. 2 stretches are compositionally biased toward acidic residues: residues 112-122 and 131-144; these read VVGESDSEVEG and DSSE…DDEE. Residues 145–163 show a composition bias toward basic and acidic residues; that stretch reads IERRRGMMRQRAQERKNEE. Residues 178–195 are compositionally biased toward acidic residues; the sequence is ESESESEYEEYTDSEDEM. A Glycyl lysine isopeptide (Lys-Gly) (interchain with G-Cter in SUMO2) cross-link involves residue lysine 249. Threonine 267 is subject to Phosphothreonine. A Glycyl lysine isopeptide (Lys-Gly) (interchain with G-Cter in SUMO2) cross-link involves residue lysine 357. Serine 361 carries the post-translational modification Phosphoserine. Glycyl lysine isopeptide (Lys-Gly) (interchain with G-Cter in SUMO2) cross-links involve residues lysine 371, lysine 381, lysine 415, and lysine 418. Serine 432 carries the phosphoserine modification.

The protein belongs to the MFAP1 family. As to quaternary structure, component of the spliceosome B complex. Interacts with PRPF38A (via N-terminal interaction domain).

Its subcellular location is the nucleus. Its function is as follows. Involved in pre-mRNA splicing as a component of the spliceosome. This is Microfibrillar-associated protein 1 from Homo sapiens (Human).